Here is a 143-residue protein sequence, read N- to C-terminus: ATP synthase subunit b' (143 aa).

The chain crosses the membrane as a helical span at residues 6–26 (ATLPFMALQFLLLAAVLNAIF).

Belongs to the ATPase B chain family. F-type ATPases have 2 components, F(1) - the catalytic core - and F(0) - the membrane proton channel. F(1) has five subunits: alpha(3), beta(3), gamma(1), delta(1), epsilon(1). F(0) has four main subunits: a(1), b(1), b'(1) and c(10-14). The alpha and beta chains form an alternating ring which encloses part of the gamma chain. F(1) is attached to F(0) by a central stalk formed by the gamma and epsilon chains, while a peripheral stalk is formed by the delta, b and b' chains.

The protein localises to the cellular thylakoid membrane. Its function is as follows. F(1)F(0) ATP synthase produces ATP from ADP in the presence of a proton or sodium gradient. F-type ATPases consist of two structural domains, F(1) containing the extramembraneous catalytic core and F(0) containing the membrane proton channel, linked together by a central stalk and a peripheral stalk. During catalysis, ATP synthesis in the catalytic domain of F(1) is coupled via a rotary mechanism of the central stalk subunits to proton translocation. Component of the F(0) channel, it forms part of the peripheral stalk, linking F(1) to F(0). The b'-subunit is a diverged and duplicated form of b found in plants and photosynthetic bacteria. This Nostoc punctiforme (strain ATCC 29133 / PCC 73102) protein is ATP synthase subunit b'.